The chain runs to 369 residues: Chaperone protein DnaJ (369 aa).

Residues Ser-4–Gly-69 enclose the J domain. A CR-type zinc finger spans residues Gly-130–Asp-207. Zn(2+)-binding residues include Cys-143, Cys-146, Cys-159, Cys-162, Cys-181, Cys-184, Cys-195, and Cys-198. CXXCXGXG motif repeat units lie at residues Cys-143–Gly-150, Cys-159–Gly-166, Cys-181–Gly-188, and Cys-195–Thr-202.

It belongs to the DnaJ family. As to quaternary structure, homodimer. The cofactor is Zn(2+).

It localises to the cytoplasm. Participates actively in the response to hyperosmotic and heat shock by preventing the aggregation of stress-denatured proteins and by disaggregating proteins, also in an autonomous, DnaK-independent fashion. Unfolded proteins bind initially to DnaJ; upon interaction with the DnaJ-bound protein, DnaK hydrolyzes its bound ATP, resulting in the formation of a stable complex. GrpE releases ADP from DnaK; ATP binding to DnaK triggers the release of the substrate protein, thus completing the reaction cycle. Several rounds of ATP-dependent interactions between DnaJ, DnaK and GrpE are required for fully efficient folding. Also involved, together with DnaK and GrpE, in the DNA replication of plasmids through activation of initiation proteins. This Helicobacter pylori (strain J99 / ATCC 700824) (Campylobacter pylori J99) protein is Chaperone protein DnaJ.